We begin with the raw amino-acid sequence, 278 residues long: Pantothenate synthetase (278 aa).

Position 26–33 (26–33) interacts with ATP; the sequence is MGNLHEGH. H33 functions as the Proton donor in the catalytic mechanism. Residue Q57 participates in (R)-pantoate binding. Position 57 (Q57) interacts with beta-alanine. 144–147 contributes to the ATP binding site; that stretch reads GKKD. Q150 is a (R)-pantoate binding site. ATP contacts are provided by residues G173 and 181-184; that span reads LSSR.

This sequence belongs to the pantothenate synthetase family. In terms of assembly, homodimer.

Its subcellular location is the cytoplasm. The catalysed reaction is (R)-pantoate + beta-alanine + ATP = (R)-pantothenate + AMP + diphosphate + H(+). It functions in the pathway cofactor biosynthesis; (R)-pantothenate biosynthesis; (R)-pantothenate from (R)-pantoate and beta-alanine: step 1/1. Functionally, catalyzes the condensation of pantoate with beta-alanine in an ATP-dependent reaction via a pantoyl-adenylate intermediate. The chain is Pantothenate synthetase from Neisseria meningitidis serogroup C / serotype 2a (strain ATCC 700532 / DSM 15464 / FAM18).